The chain runs to 256 residues: Ribosomal RNA small subunit methyltransferase A (256 aa).

Residues Asn12, Leu14, Gly39, Glu60, Asp85, and Asn103 each contribute to the S-adenosyl-L-methionine site.

It belongs to the class I-like SAM-binding methyltransferase superfamily. rRNA adenine N(6)-methyltransferase family. RsmA subfamily.

It localises to the cytoplasm. The catalysed reaction is adenosine(1518)/adenosine(1519) in 16S rRNA + 4 S-adenosyl-L-methionine = N(6)-dimethyladenosine(1518)/N(6)-dimethyladenosine(1519) in 16S rRNA + 4 S-adenosyl-L-homocysteine + 4 H(+). Specifically dimethylates two adjacent adenosines (A1518 and A1519) in the loop of a conserved hairpin near the 3'-end of 16S rRNA in the 30S particle. May play a critical role in biogenesis of 30S subunits. The polypeptide is Ribosomal RNA small subunit methyltransferase A (Legionella pneumophila (strain Corby)).